The sequence spans 473 residues: Notchless protein homolog (473 aa).

The ubiquitin-like (UBL) domain stretch occupies residues 9–91 (GKTVMCLLTD…VLTIVYQQQA (83 aa)). WD repeat units follow at residues 107–146 (GHAE…PLFT), 149–188 (GHKN…LEGS), 192–236 (GHKK…SIIC), 239–277 (GHTL…LIRE), 313–354 (EKQK…QPKK), 358–399 (GHQQ…TVFR), 400–439 (GHVG…LKQD), and 442–473 (GHAD…LWKG). The DWD box motif lies at 417–432 (LLSGSKDSTLKIWEIR).

Belongs to the NLE1/RSA4 family. Associates with the pre-60S ribosomal particle. As to expression, constitutively and ubiquitously expressed.

The protein resides in the nucleus. The protein localises to the nucleolus. Functionally, required for female gametophyte development. This Arabidopsis thaliana (Mouse-ear cress) protein is Notchless protein homolog.